A 313-amino-acid chain; its full sequence is tRNA-cytidine(32) 2-sulfurtransferase (313 aa).

Positions 47–52 (SGGKDS) match the PP-loop motif motif. Residues C122, C125, and C213 each contribute to the [4Fe-4S] cluster site.

Belongs to the TtcA family. Homodimer. Requires Mg(2+) as cofactor. It depends on [4Fe-4S] cluster as a cofactor.

The protein localises to the cytoplasm. The catalysed reaction is cytidine(32) in tRNA + S-sulfanyl-L-cysteinyl-[cysteine desulfurase] + AH2 + ATP = 2-thiocytidine(32) in tRNA + L-cysteinyl-[cysteine desulfurase] + A + AMP + diphosphate + H(+). It participates in tRNA modification. Catalyzes the ATP-dependent 2-thiolation of cytidine in position 32 of tRNA, to form 2-thiocytidine (s(2)C32). The sulfur atoms are provided by the cysteine/cysteine desulfurase (IscS) system. This is tRNA-cytidine(32) 2-sulfurtransferase from Yersinia enterocolitica serotype O:8 / biotype 1B (strain NCTC 13174 / 8081).